Here is a 133-residue protein sequence, read N- to C-terminus: Small ribosomal subunit protein uS9 (133 aa).

Residues Arg98–Ala113 show a composition bias toward basic and acidic residues. The disordered stretch occupies residues Arg98–Arg133. Residues Lys114–Arg133 show a composition bias toward basic residues.

The protein belongs to the universal ribosomal protein uS9 family.

The protein is Small ribosomal subunit protein uS9 of Parasynechococcus marenigrum (strain WH8102).